A 271-amino-acid chain; its full sequence is MPELPEVEVTRQGVSPYLIDNQVTDLIVRNPSLRWPVPEIAKQIIGQTIRNVRRRGKYLLIDTDAGTTIVHLGMSGSLRILPASTPVEKHDHIDLVLASGKALRFNDPRRFGAWLWCELPEQAHPLLSKLGPEPLTDAFNAPYLLAALANKKKAIKLCLMDNHIVVGVGNIYANEALFAAGIHPQAEAGKVDAERIEILVSEVKQILASAIKQGGTTLKDFTNADGKPGYFAQKLHVYGRGGETCTQCGHLLSEIKLGQRATVFCSLCQKL.

Proline 2 (schiff-base intermediate with DNA) is an active-site residue. Glutamate 3 (proton donor) is an active-site residue. The Proton donor; for beta-elimination activity role is filled by lysine 57. Residues histidine 90, arginine 109, and lysine 151 each coordinate DNA. An FPG-type zinc finger spans residues 236–270 (HVYGRGGETCTQCGHLLSEIKLGQRATVFCSLCQK). The active-site Proton donor; for delta-elimination activity is the arginine 260.

This sequence belongs to the FPG family. In terms of assembly, monomer. Requires Zn(2+) as cofactor.

The catalysed reaction is Hydrolysis of DNA containing ring-opened 7-methylguanine residues, releasing 2,6-diamino-4-hydroxy-5-(N-methyl)formamidopyrimidine.. It catalyses the reaction 2'-deoxyribonucleotide-(2'-deoxyribose 5'-phosphate)-2'-deoxyribonucleotide-DNA = a 3'-end 2'-deoxyribonucleotide-(2,3-dehydro-2,3-deoxyribose 5'-phosphate)-DNA + a 5'-end 5'-phospho-2'-deoxyribonucleoside-DNA + H(+). Functionally, involved in base excision repair of DNA damaged by oxidation or by mutagenic agents. Acts as a DNA glycosylase that recognizes and removes damaged bases. Has a preference for oxidized purines, such as 7,8-dihydro-8-oxoguanine (8-oxoG). Has AP (apurinic/apyrimidinic) lyase activity and introduces nicks in the DNA strand. Cleaves the DNA backbone by beta-delta elimination to generate a single-strand break at the site of the removed base with both 3'- and 5'-phosphates. The polypeptide is Formamidopyrimidine-DNA glycosylase (Shewanella halifaxensis (strain HAW-EB4)).